The primary structure comprises 429 residues: Glucose-6-phosphate isomerase (429 aa).

The Proton donor role is filled by Glu282. Catalysis depends on residues His303 and Lys418.

This sequence belongs to the GPI family.

It is found in the cytoplasm. It catalyses the reaction alpha-D-glucose 6-phosphate = beta-D-fructose 6-phosphate. The protein operates within carbohydrate biosynthesis; gluconeogenesis. Its pathway is carbohydrate degradation; glycolysis; D-glyceraldehyde 3-phosphate and glycerone phosphate from D-glucose: step 2/4. Catalyzes the reversible isomerization of glucose-6-phosphate to fructose-6-phosphate. The protein is Glucose-6-phosphate isomerase of Mesomycoplasma hyopneumoniae (strain 232) (Mycoplasma hyopneumoniae).